Here is a 179-residue protein sequence, read N- to C-terminus: ATP-dependent protease subunit HslV (179 aa).

The active site involves threonine 6. Residues serine 164, cysteine 167, and threonine 170 each coordinate Na(+).

It belongs to the peptidase T1B family. HslV subfamily. A double ring-shaped homohexamer of HslV is capped on each side by a ring-shaped HslU homohexamer. The assembly of the HslU/HslV complex is dependent on binding of ATP.

Its subcellular location is the cytoplasm. The enzyme catalyses ATP-dependent cleavage of peptide bonds with broad specificity.. Its activity is regulated as follows. Allosterically activated by HslU binding. In terms of biological role, protease subunit of a proteasome-like degradation complex believed to be a general protein degrading machinery. This is ATP-dependent protease subunit HslV from Listeria innocua serovar 6a (strain ATCC BAA-680 / CLIP 11262).